A 269-amino-acid chain; its full sequence is Phosphonoacetaldehyde hydrolase (269 aa).

The active-site Nucleophile is Asp10. Asp10 and Ala12 together coordinate Mg(2+). Residue Lys52 is the Schiff-base intermediate with substrate of the active site. Mg(2+) is bound at residue Asp186.

It belongs to the HAD-like hydrolase superfamily. PhnX family. Homodimer. Requires Mg(2+) as cofactor.

The enzyme catalyses phosphonoacetaldehyde + H2O = acetaldehyde + phosphate + H(+). Its function is as follows. Involved in phosphonate degradation. This Salmonella typhi protein is Phosphonoacetaldehyde hydrolase.